A 417-amino-acid polypeptide reads, in one-letter code: Serine hydroxymethyltransferase (417 aa).

(6S)-5,6,7,8-tetrahydrofolate-binding positions include leucine 121 and 125 to 127 (GHL). Lysine 229 carries the post-translational modification N6-(pyridoxal phosphate)lysine. Residue 355-357 (SPF) participates in (6S)-5,6,7,8-tetrahydrofolate binding.

Belongs to the SHMT family. In terms of assembly, homodimer. Pyridoxal 5'-phosphate is required as a cofactor.

Its subcellular location is the cytoplasm. The enzyme catalyses (6R)-5,10-methylene-5,6,7,8-tetrahydrofolate + glycine + H2O = (6S)-5,6,7,8-tetrahydrofolate + L-serine. It participates in one-carbon metabolism; tetrahydrofolate interconversion. The protein operates within amino-acid biosynthesis; glycine biosynthesis; glycine from L-serine: step 1/1. Functionally, catalyzes the reversible interconversion of serine and glycine with tetrahydrofolate (THF) serving as the one-carbon carrier. This reaction serves as the major source of one-carbon groups required for the biosynthesis of purines, thymidylate, methionine, and other important biomolecules. Also exhibits THF-independent aldolase activity toward beta-hydroxyamino acids, producing glycine and aldehydes, via a retro-aldol mechanism. The polypeptide is Serine hydroxymethyltransferase (Salmonella choleraesuis (strain SC-B67)).